Consider the following 244-residue polypeptide: 2-C-methyl-D-erythritol 4-phosphate cytidylyltransferase (244 aa).

This sequence belongs to the IspD/TarI cytidylyltransferase family. IspD subfamily.

The enzyme catalyses 2-C-methyl-D-erythritol 4-phosphate + CTP + H(+) = 4-CDP-2-C-methyl-D-erythritol + diphosphate. The protein operates within isoprenoid biosynthesis; isopentenyl diphosphate biosynthesis via DXP pathway; isopentenyl diphosphate from 1-deoxy-D-xylulose 5-phosphate: step 2/6. Catalyzes the formation of 4-diphosphocytidyl-2-C-methyl-D-erythritol from CTP and 2-C-methyl-D-erythritol 4-phosphate (MEP). The polypeptide is 2-C-methyl-D-erythritol 4-phosphate cytidylyltransferase (Corynebacterium diphtheriae (strain ATCC 700971 / NCTC 13129 / Biotype gravis)).